A 483-amino-acid chain; its full sequence is NADH-quinone oxidoreductase subunit N (483 aa).

The next 13 helical transmembrane spans lie at 7-27 (AILTPEIVLSLFAMAGLLGAV), 33-53 (ALASAMCWGTAALFIIMAFYI), 76-96 (FAKITILLSAAAILMISQDYM), 108-128 (VLIILAVVGMMIMVSAGDLIA), 161-181 (FVLGALSSGLLLYGSSLAYGF), 196-216 (GGDMPLGLLFGLVFITAGLAF), 235-255 (PTPITALFATAPKVAAMALFA), 272-292 (IVAFLAVVSMFLGAIAAIGQT), 297-317 (LMAYSSISHMGFALMGLSAGT), 323-343 (AMLIYMAIYVAMNIGTFAFIL), 369-389 (ALAILVMMFSLAGVPPLLGFF), 402-422 (GLVWLAIAGVIASVIGAFYYI), and 442-462 (MGLVPYVGLIAMALVIGLGWV).

It belongs to the complex I subunit 2 family. In terms of assembly, NDH-1 is composed of 14 different subunits. Subunits NuoA, H, J, K, L, M, N constitute the membrane sector of the complex.

Its subcellular location is the cell inner membrane. It carries out the reaction a quinone + NADH + 5 H(+)(in) = a quinol + NAD(+) + 4 H(+)(out). NDH-1 shuttles electrons from NADH, via FMN and iron-sulfur (Fe-S) centers, to quinones in the respiratory chain. The immediate electron acceptor for the enzyme in this species is believed to be ubiquinone. Couples the redox reaction to proton translocation (for every two electrons transferred, four hydrogen ions are translocated across the cytoplasmic membrane), and thus conserves the redox energy in a proton gradient. The polypeptide is NADH-quinone oxidoreductase subunit N (Jannaschia sp. (strain CCS1)).